The chain runs to 291 residues: Pantothenate synthetase (291 aa).

Residue 30–37 (MGNLHEGH) coordinates ATP. The active-site Proton donor is the histidine 37. A (R)-pantoate-binding site is contributed by glutamine 61. Glutamine 61 provides a ligand contact to beta-alanine. 149–152 (GEKD) is a binding site for ATP. A (R)-pantoate-binding site is contributed by glutamine 155. ATP contacts are provided by residues valine 178 and 186 to 189 (MSSR).

The protein belongs to the pantothenate synthetase family. As to quaternary structure, homodimer.

The protein resides in the cytoplasm. The catalysed reaction is (R)-pantoate + beta-alanine + ATP = (R)-pantothenate + AMP + diphosphate + H(+). The protein operates within cofactor biosynthesis; (R)-pantothenate biosynthesis; (R)-pantothenate from (R)-pantoate and beta-alanine: step 1/1. Functionally, catalyzes the condensation of pantoate with beta-alanine in an ATP-dependent reaction via a pantoyl-adenylate intermediate. This chain is Pantothenate synthetase, found in Aliivibrio fischeri (strain ATCC 700601 / ES114) (Vibrio fischeri).